The primary structure comprises 110 residues: Small ribosomal subunit protein bS16 (110 aa).

The span at 82-103 shows a compositional bias: basic and acidic residues; that stretch reads VKKREARNNPEKAVPRKERKAQ. The segment at 82–110 is disordered; the sequence is VKKREARNNPEKAVPRKERKAQAEAAAKG.

The protein belongs to the bacterial ribosomal protein bS16 family.

The sequence is that of Small ribosomal subunit protein bS16 from Bradyrhizobium sp. (strain ORS 278).